The following is a 122-amino-acid chain: Small ribosomal subunit protein bS6 (122 aa).

It belongs to the bacterial ribosomal protein bS6 family.

Functionally, binds together with bS18 to 16S ribosomal RNA. In Methylibium petroleiphilum (strain ATCC BAA-1232 / LMG 22953 / PM1), this protein is Small ribosomal subunit protein bS6.